We begin with the raw amino-acid sequence, 560 residues long: Dihydroxy-acid dehydratase (560 aa).

Residue aspartate 78 participates in Mg(2+) binding. A [2Fe-2S] cluster-binding site is contributed by cysteine 119. Residues aspartate 120 and lysine 121 each coordinate Mg(2+). An N6-carboxylysine modification is found at lysine 121. Cysteine 192 provides a ligand contact to [2Fe-2S] cluster. Position 446 (glutamate 446) interacts with Mg(2+). Serine 472 acts as the Proton acceptor in catalysis.

This sequence belongs to the IlvD/Edd family. Homodimer. Requires [2Fe-2S] cluster as cofactor. Mg(2+) serves as cofactor.

The catalysed reaction is (2R)-2,3-dihydroxy-3-methylbutanoate = 3-methyl-2-oxobutanoate + H2O. It carries out the reaction (2R,3R)-2,3-dihydroxy-3-methylpentanoate = (S)-3-methyl-2-oxopentanoate + H2O. It participates in amino-acid biosynthesis; L-isoleucine biosynthesis; L-isoleucine from 2-oxobutanoate: step 3/4. Its pathway is amino-acid biosynthesis; L-valine biosynthesis; L-valine from pyruvate: step 3/4. In terms of biological role, functions in the biosynthesis of branched-chain amino acids. Catalyzes the dehydration of (2R,3R)-2,3-dihydroxy-3-methylpentanoate (2,3-dihydroxy-3-methylvalerate) into 2-oxo-3-methylpentanoate (2-oxo-3-methylvalerate) and of (2R)-2,3-dihydroxy-3-methylbutanoate (2,3-dihydroxyisovalerate) into 2-oxo-3-methylbutanoate (2-oxoisovalerate), the penultimate precursor to L-isoleucine and L-valine, respectively. The protein is Dihydroxy-acid dehydratase of Anaeromyxobacter dehalogenans (strain 2CP-1 / ATCC BAA-258).